A 369-amino-acid chain; its full sequence is Phosphatidylglycerol--prolipoprotein diacylglyceryl transferase (369 aa).

The next 3 helical transmembrane spans lie at Y26–L46, Y60–G80, and L97–I117. R167 contacts a 1,2-diacyl-sn-glycero-3-phospho-(1'-sn-glycerol). Helical transmembrane passes span V216–L236 and F273–F293.

This sequence belongs to the Lgt family.

The protein resides in the cell membrane. It catalyses the reaction L-cysteinyl-[prolipoprotein] + a 1,2-diacyl-sn-glycero-3-phospho-(1'-sn-glycerol) = an S-1,2-diacyl-sn-glyceryl-L-cysteinyl-[prolipoprotein] + sn-glycerol 1-phosphate + H(+). It participates in protein modification; lipoprotein biosynthesis (diacylglyceryl transfer). In terms of biological role, catalyzes the transfer of the diacylglyceryl group from phosphatidylglycerol to the sulfhydryl group of the N-terminal cysteine of a prolipoprotein, the first step in the formation of mature lipoproteins. This is Phosphatidylglycerol--prolipoprotein diacylglyceryl transferase from Mycoplasmoides gallisepticum (strain R(low / passage 15 / clone 2)) (Mycoplasma gallisepticum).